The chain runs to 323 residues: Conjugal transfer protein TrbB (323 aa).

An ATP-binding site is contributed by 151-158 (GGTGSGKT).

This sequence belongs to the GSP E family.

The protein resides in the cytoplasm. The protein is Conjugal transfer protein TrbB (trbB) of Rhizobium radiobacter (Agrobacterium tumefaciens).